The chain runs to 339 residues: MSASGLPFDDFRELIRNLPGPDLGAERAVREREATLTKPAGSLGRMEDIVAWLAAWTGKRTPQINRPLVAVFAGNHGVTAKNITPFPPSVTAQMVENFAAGGAAINQICIANDLGLKVFDLALEHPTGDITEEPAMDERTCAATMAFGMEAIAGGTDLLCIGEMGIGNTTIAAAIALALFGGTAEDWVGPGTGSTGELLQRKLAAVRQAVALHQAHLQDPLEVLSRLGGREIAAMAGAILAARMEKIPVIVDGFVASAAAAVLYAANPEAIDHCLFGHVSAEPGHRKLLEKMGKQPLLDMGMRLGEGTGAALAASIVKAAALCHSGMATFEQAGISGSK.

Residue glutamate 306 is the Proton acceptor of the active site.

This sequence belongs to the CobT family.

The enzyme catalyses 5,6-dimethylbenzimidazole + nicotinate beta-D-ribonucleotide = alpha-ribazole 5'-phosphate + nicotinate + H(+). Its pathway is nucleoside biosynthesis; alpha-ribazole biosynthesis; alpha-ribazole from 5,6-dimethylbenzimidazole: step 1/2. In terms of biological role, catalyzes the synthesis of alpha-ribazole-5'-phosphate from nicotinate mononucleotide (NAMN) and 5,6-dimethylbenzimidazole (DMB). This chain is Nicotinate-nucleotide--dimethylbenzimidazole phosphoribosyltransferase, found in Brucella anthropi (strain ATCC 49188 / DSM 6882 / CCUG 24695 / JCM 21032 / LMG 3331 / NBRC 15819 / NCTC 12168 / Alc 37) (Ochrobactrum anthropi).